A 309-amino-acid chain; its full sequence is Porphobilinogen deaminase (309 aa).

At Cys241 the chain carries S-(dipyrrolylmethanemethyl)cysteine.

The protein belongs to the HMBS family. Monomer. Dipyrromethane serves as cofactor.

It catalyses the reaction 4 porphobilinogen + H2O = hydroxymethylbilane + 4 NH4(+). It participates in porphyrin-containing compound metabolism; protoporphyrin-IX biosynthesis; coproporphyrinogen-III from 5-aminolevulinate: step 2/4. Tetrapolymerization of the monopyrrole PBG into the hydroxymethylbilane pre-uroporphyrinogen in several discrete steps. This chain is Porphobilinogen deaminase, found in Bacillus cereus (strain ATCC 10987 / NRS 248).